A 456-amino-acid polypeptide reads, in one-letter code: Serine--tRNA ligase (456 aa).

252–254 (TSE) is an L-serine binding site. ATP-binding positions include 283–285 (RKE) and Val-299. Glu-306 is a binding site for L-serine. 370 to 373 (ELVS) is a binding site for ATP. Residue Thr-404 participates in L-serine binding.

Belongs to the class-II aminoacyl-tRNA synthetase family. Type-1 seryl-tRNA synthetase subfamily. As to quaternary structure, homodimer. The tRNA molecule binds across the dimer.

The protein localises to the cytoplasm. It catalyses the reaction tRNA(Ser) + L-serine + ATP = L-seryl-tRNA(Ser) + AMP + diphosphate + H(+). The catalysed reaction is tRNA(Sec) + L-serine + ATP = L-seryl-tRNA(Sec) + AMP + diphosphate + H(+). It participates in aminoacyl-tRNA biosynthesis; selenocysteinyl-tRNA(Sec) biosynthesis; L-seryl-tRNA(Sec) from L-serine and tRNA(Sec): step 1/1. Functionally, catalyzes the attachment of serine to tRNA(Ser). Is also able to aminoacylate tRNA(Sec) with serine, to form the misacylated tRNA L-seryl-tRNA(Sec), which will be further converted into selenocysteinyl-tRNA(Sec). In Korarchaeum cryptofilum (strain OPF8), this protein is Serine--tRNA ligase.